Reading from the N-terminus, the 340-residue chain is Spermidine synthase 2 (340 aa).

The segment at 1-41 (MSSTQEASVTDLPVKRPREAEEDNNGGAMETENGGGEIKEP) is disordered. Ser2 is modified (N-acetylserine). One can recognise a PABS domain in the interval 49-286 (PGWFSEISPM…GVIGFMLCSS (238 aa)). Position 80 (Gln80) interacts with S-adenosyl 3-(methylsulfanyl)propylamine. Tyr110 is a putrescine binding site. S-adenosyl 3-(methylsulfanyl)propylamine-binding positions include Gln111, Asp135, Glu155, 186 to 187 (DG), and Asp205. Asp205 (proton acceptor) is an active-site residue. Putrescine contacts are provided by residues 205–208 (DSSD) and Tyr274.

Belongs to the spermidine/spermine synthase family. As to quaternary structure, heterodimer. Component of a multiprotein complex. Interacts with SPMS and SPDSYN1.

It carries out the reaction S-adenosyl 3-(methylsulfanyl)propylamine + putrescine = S-methyl-5'-thioadenosine + spermidine + H(+). It functions in the pathway amine and polyamine biosynthesis; spermidine biosynthesis; spermidine from putrescine: step 1/1. The sequence is that of Spermidine synthase 2 (SPDSYN2) from Arabidopsis thaliana (Mouse-ear cress).